The primary structure comprises 363 residues: MSSDLKQTPLYQNYVDRGAKIVEFGGWAMPVQFSSIKEEHNAVRYEIGLFDVSHMGEIEVTGKDASQFVQYLLSNDTDNLTTSKALYTALCNEEGGIIDDLVIYKLADDNYLLVVNAANTEKDFNWILKHKEKFDVEVQNVSNQYGQLAIQGPKARDLINQLVDEDVTEMKMFEFKQGVKLFGAIVILSQSGYTGEDGFEIYCNIDDTEKIWDGLLEYNVMPCGLGARDTLRLEAGLPLHGQDLTESITPYEGGIAFASKPLIDADFIGKSVLKDQKENGAPRRTVGLELLEKGIARTGYEVMDLDGNIIGEVTSGTQSPSSGKSIALAMIKRDEFEMGRELLVQVRKRQLKAKIVKKNQIDK.

This sequence belongs to the GcvT family. The glycine cleavage system is composed of four proteins: P, T, L and H.

The enzyme catalyses N(6)-[(R)-S(8)-aminomethyldihydrolipoyl]-L-lysyl-[protein] + (6S)-5,6,7,8-tetrahydrofolate = N(6)-[(R)-dihydrolipoyl]-L-lysyl-[protein] + (6R)-5,10-methylene-5,6,7,8-tetrahydrofolate + NH4(+). Its function is as follows. The glycine cleavage system catalyzes the degradation of glycine. The polypeptide is Aminomethyltransferase (Staphylococcus aureus (strain MRSA252)).